Here is a 33-residue protein sequence, read N- to C-terminus: Potassium channel toxin alpha-KTx 24.1 (33 aa).

Cystine bridges form between Cys-4–Cys-23, Cys-9–Cys-28, Cys-13–Cys-30, and Cys-18–Cys-33.

This sequence belongs to the short scorpion toxin superfamily. Potassium channel inhibitor family. Alpha-KTx 24 subfamily. In terms of processing, contains 4 disulfide bonds. In terms of tissue distribution, expressed by the venom gland.

It localises to the secreted. In terms of biological role, reversibly blocks voltage-gated potassium channels Kv1.2/KCNA2, Kv1.3/KCNA3 and, weakly, Shaker B. This is Potassium channel toxin alpha-KTx 24.1 from Pandinus imperator (Emperor scorpion).